A 529-amino-acid chain; its full sequence is Probable biotin-dependent acyl-coenzyme A carboxylase beta2 subunit (529 aa).

Residues 20–271 (MSGKLDEINA…IKQGPAPAPV (252 aa)) enclose the CoA carboxyltransferase N-terminal domain. One can recognise a CoA carboxyltransferase C-terminal domain in the interval 270–520 (PVTEPLFDAE…SAIANGPIKG (251 aa)).

Belongs to the AccD/PCCB family. In terms of assembly, the biotin-dependent acyl-CoA carboxylase complex is composed of an AccA protein, which contains the biotin carboxylase (BC) and biotin carboxyl carrier protein (BCCP) domains, and an AccD protein, which contains the carboxyl transferase (CT) domain.

Functionally, component of a biotin-dependent acyl-CoA carboxylase complex. This subunit transfers the CO2 from carboxybiotin to the CoA ester substrate. In Mycobacterium tuberculosis (strain ATCC 25618 / H37Rv), this protein is Probable biotin-dependent acyl-coenzyme A carboxylase beta2 subunit (accD2).